A 322-amino-acid chain; its full sequence is uncharacterized protein (322 aa).

The helical transmembrane segment at 212 to 234 threads the bilayer; it reads VCALLVGAISVATAGAAFSIIIV.

The protein resides in the membrane. This is an uncharacterized protein from Rickettsia prowazekii (strain Madrid E).